The following is a 225-amino-acid chain: Germin-like protein 8-6 (225 aa).

Positions 1-23 are cleaved as a signal peptide; that stretch reads MASPSSLCLLTALLALVSWQTIA. Cys-33 and Cys-48 form a disulfide bridge. A Cupin type-1 domain is found at 63–213; it reads AMLDTPRKTN…AFQVEKGTID (151 aa). N-linked (GlcNAc...) asparagine glycosylation is present at Asn-77. Mn(2+)-binding residues include His-110, His-112, and Glu-117. A glycan (N-linked (GlcNAc...) asparagine) is linked at Asn-136. His-158 lines the Mn(2+) pocket.

The protein belongs to the germin family. Oligomer (believed to be a pentamer but probably hexamer).

It localises to the secreted. It is found in the extracellular space. The protein localises to the apoplast. In terms of biological role, plays a role in broad-spectrum disease resistance. Probably has no oxalate oxidase activity even if the active site is conserved. The chain is Germin-like protein 8-6 from Oryza sativa subsp. japonica (Rice).